The sequence spans 1179 residues: Integrin alpha-E (1179 aa).

The signal sequence occupies residues 1–18 (MWLFHTLLCIASLALLAA). Residues 19-1124 (FNVDVARPWL…VFLKDEKYHS (1106 aa)) are Extracellular-facing. 2 FG-GAP repeats span residues 22 to 79 (DVAR…EILC) and 80 to 138 (HPVE…PQAQ). Asparagine 49 carries an N-linked (GlcNAc...) asparagine glycan. Disulfide bonds link cysteine 70/cysteine 79 and cysteine 126/cysteine 159. Residues 145 to 199 (ENLLDPDARVDTGDCYSNKEGGGEDDVNTARQRRALEKEEEEDKEEEEDEEEEEA) form an X-domain (extra domain) region. The disordered stretch occupies residues 158-200 (DCYSNKEGGGEDDVNTARQRRALEKEEEEDKEEEEDEEEEEAG). A compositionally biased stretch (acidic residues) spans 182–200 (KEEEEDKEEEEDEEEEEAG). In terms of domain architecture, VWFA spans 200–389 (GTEIAIILDG…SKLRYNIISM (190 aa)). Asparagine 271 and asparagine 321 each carry an N-linked (GlcNAc...) asparagine glycan. The stretch at 390–442 (EGTVGDALHYQLAQIGFSAQILDERQVLLGAVGAFDWSGGALLYDTRSRRGRF) is one FG-GAP 3 repeat. Residue asparagine 444 is glycosylated (N-linked (GlcNAc...) asparagine). 4 FG-GAP repeats span residues 447 to 499 (AAAA…GREA), 500 to 560 (SFLP…DGSF), 563 to 627 (ARIL…GLSA), and 631 to 691 (QRIR…FTPS). Positions 522, 524, 526, 530, 586, 588, 590, 594, 654, 656, 658, and 662 each coordinate Ca(2+). Cysteine 706 and cysteine 762 are joined by a disulfide. 2 N-linked (GlcNAc...) asparagine glycosylation sites follow: asparagine 726 and asparagine 782. Cysteine 823 and cysteine 829 are disulfide-bonded. A glycan (N-linked (GlcNAc...) asparagine) is linked at asparagine 857. Cysteine 893 and cysteine 907 are oxidised to a cystine. 2 N-linked (GlcNAc...) asparagine glycosylation sites follow: asparagine 934 and asparagine 954. Intrachain disulfides connect cysteine 1008–cysteine 1033 and cysteine 1041–cysteine 1057. Asparagine 1065 and asparagine 1096 each carry an N-linked (GlcNAc...) asparagine glycan. Residues 1125-1147 (LPIIIKGSVGGLLVLIVILVILF) form a helical membrane-spanning segment. The Cytoplasmic segment spans residues 1148 to 1179 (KCGFFKRKYQQLNLESIRKAQLKSENLLEEEN). The short motif at 1150–1154 (GFFKR) is the GFFKR motif element.

The protein belongs to the integrin alpha chain family. In terms of assembly, heterodimer of an alpha and a beta subunit. The alpha subunit is composed of a heavy and a light chains linked by a disulfide bond. Alpha-E associates with beta-7. As to expression, expressed on a subclass of T-lymphocytes known as intra-epithelial lymphocytes which are located between mucosal epithelial cells.

The protein resides in the membrane. Its function is as follows. Integrin alpha-E/beta-7 is a receptor for E-cadherin. It mediates adhesion of intra-epithelial T-lymphocytes to epithelial cell monolayers. This chain is Integrin alpha-E (ITGAE), found in Homo sapiens (Human).